A 305-amino-acid chain; its full sequence is E3 ubiquitin-protein ligase RNF115 (305 aa).

The residue at position 2 (Ala2) is an N-acetylalanine. Positions 100–110 (NRANERGHQTH) are enriched in basic and acidic residues. The tract at residues 100 to 139 (NRANERGHQTHTDFWGPSRPPRLPMTRRYRSRGSTRPDRS) is disordered. At Ser133 the chain carries Phosphoserine. An RING-type zinc finger spans residues 229 to 270 (CPVCKEDYTVEEKVRQLPCNHFFHSSCIVPWLELHDTCPVCR). The tract at residues 274-305 (NGEDSTRQTQSSEASASNRFSNDSQLHDRWTF) is disordered. Residues 280-297 (RQTQSSEASASNRFSNDS) show a composition bias toward polar residues.

Interacts with RAB7A. Interacts with EGFR and FLT3. Interacts with BST2. Interacts with STX17. Interacts with YWHAE. In terms of processing, phosphorylated by AKT1, allowing association with the 14-3-3 chaperones that facilitates associating with TLRs. Post-translationally, deubiquitinated by USP9X; antogonizing its autoubiquitination and subsequent proteasomal degradation. RING-type zinc finger-dependent and E2-dependent autoubiquitination.

Its subcellular location is the cytoplasm. The protein localises to the cytoplasmic vesicle. It is found in the phagosome. The protein resides in the nucleus. It localises to the endoplasmic reticulum. Its subcellular location is the golgi apparatus. It catalyses the reaction S-ubiquitinyl-[E2 ubiquitin-conjugating enzyme]-L-cysteine + [acceptor protein]-L-lysine = [E2 ubiquitin-conjugating enzyme]-L-cysteine + N(6)-ubiquitinyl-[acceptor protein]-L-lysine.. Its pathway is protein modification; protein ubiquitination. Its function is as follows. E3 ubiquitin-protein ligase that catalyzes the 'Lys-48'- and/or 'Lys-63'-linked polyubiquitination of various substrates and thereby plays a role in a number of signaling pathways including autophagy, innate immunity, cell proliferation and cell death. Plays a role in the endosomal trafficking and degradation of membrane receptors including EGFR, FLT3, MET and CXCR4 through their polyubiquitination. Participates together with BST2 in antiviral immunity by facilitating the internalization of HIV-1 virions into intracellular vesicles leading to their lysosomal degradation. Also possesses an antiviral activity independently of BST2 by promoting retroviral GAG proteins ubiquitination, redistribution to endo-lysosomal compartments and, ultimately, lysosomal degradation. Catalyzes distinct types of ubiquitination on MAVS and STING1 at different phases of viral infection to promote innate antiviral response. Mediates the 'Lys-48'-linked ubiquitination of MAVS leading to its proteasomal degradation and ubiquitinates STING1 via 'Lys-63'-linked polyubiquitination, critical for its oligomerization and the subsequent recruitment of TBK1. Plays a positive role in the autophagosome-lysosome fusion by interacting with STX17 and enhancing its stability without affecting 'Lys-48'- or 'Lys-63'-linked polyubiquitination levels, which in turn promotes autophagosome maturation. Negatively regulates TLR-induced expression of proinflammatory cytokines by catalyzing 'Lys-11'-linked ubiquitination of RAB1A and RAB13 to inhibit post-ER trafficking of TLRs to the Golgi by RAB1A and subsequently from the Golgi apparatus to the cell surface by RAB13. The chain is E3 ubiquitin-protein ligase RNF115 from Mus musculus (Mouse).